The following is a 332-amino-acid chain: MKIKSALLTLVGALTVFSSSAHSKDLKIGLSIDDLRLERWQKDRDIFVNKAESMGAKVFVQSANGDDSAQISQIENMINKNIDVLVIIPHNGEVLSNVISEAKKEGIKVLAYDRLINNADLDFYVSFDNEKVGELQAKSIVAVKPEGNYFLMGGSPVDNNAKLFRKGQMKVLDPLIASGKIKVVGDQWVDSWLAEKALQIMENALTANKNNVDAVVASNDATAGGAIQALSAQGLSGKVAISGQDADLAAIKRIVNGSQTMTVYKPITKLADKAAEIAVELGKNEKIEANAELNNGLKNVPAYLLDPIAVDKRNINETVIKDGFHTKESIYH.

An N-terminal signal peptide occupies residues 1–23 (MKIKSALLTLVGALTVFSSSAHS).

The protein belongs to the bacterial solute-binding protein 2 family.

Its subcellular location is the periplasm. Its function is as follows. Involved in the high-affinity D-xylose membrane transport system. Binds with high affinity to xylose. This is D-xylose-binding periplasmic protein (xylF) from Haemophilus influenzae (strain ATCC 51907 / DSM 11121 / KW20 / Rd).